The following is a 300-amino-acid chain: Protoheme IX farnesyltransferase (300 aa).

9 helical membrane passes run 20 to 40 (ITKA…YLLG), 49 to 69 (WSVL…SNAY), 97 to 117 (VTAL…LYTI), 122 to 142 (AMFA…LKTV), 145 to 165 (LSVF…WVAA), 176 to 196 (LFLI…WFLY), 217 to 237 (ALQV…PVLG), 242 to 262 (LFIS…MLFY), and 278 to 298 (LMLV…VDKF).

The protein belongs to the UbiA prenyltransferase family. Protoheme IX farnesyltransferase subfamily.

It is found in the cell inner membrane. The enzyme catalyses heme b + (2E,6E)-farnesyl diphosphate + H2O = Fe(II)-heme o + diphosphate. It participates in porphyrin-containing compound metabolism; heme O biosynthesis; heme O from protoheme: step 1/1. Converts heme B (protoheme IX) to heme O by substitution of the vinyl group on carbon 2 of heme B porphyrin ring with a hydroxyethyl farnesyl side group. This Flavobacterium johnsoniae (strain ATCC 17061 / DSM 2064 / JCM 8514 / BCRC 14874 / CCUG 350202 / NBRC 14942 / NCIMB 11054 / UW101) (Cytophaga johnsonae) protein is Protoheme IX farnesyltransferase.